Here is a 122-residue protein sequence, read N- to C-terminus: Large ribosomal subunit protein uL18 (122 aa).

This sequence belongs to the universal ribosomal protein uL18 family. In terms of assembly, part of the 50S ribosomal subunit; part of the 5S rRNA/L5/L18/L25 subcomplex. Contacts the 5S and 23S rRNAs.

Functionally, this is one of the proteins that bind and probably mediate the attachment of the 5S RNA into the large ribosomal subunit, where it forms part of the central protuberance. This Buchnera aphidicola subsp. Acyrthosiphon pisum (strain 5A) protein is Large ribosomal subunit protein uL18.